Consider the following 326-residue polypeptide: Phosphatidylinositol:ceramide inositolphosphotransferase (326 aa).

Helical transmembrane passes span 33–53, 82–102, 115–135, 169–189, 199–219, and 222–242; these read LLLA…GVHY, SVFT…FIYH, VLAF…STQL, VLFG…LVFV, RLIK…IIAS, and HYSV…FFID. H181 is an active-site residue. Active-site residues include H222 and D226. The segment at 306–326 is disordered; that stretch reads MNGKHGEDINHTLSDATPNGT. The segment covering 316-326 has biased composition (polar residues); that stretch reads HTLSDATPNGT.

Belongs to the sphingomyelin synthase family.

The protein localises to the golgi apparatus. The protein resides in the trans-Golgi network membrane. In terms of biological role, catalyzes the transfer of the phosphorylinositol group from phosphatidylinositol (PI) to phytoceramide, an essential step in sphingolipid biosynthesis. May play an important role in modulating plant programmed cell death (PCD) associated with defense (e.g. toward Golovinomyces cichoracearum) by promoting sphingolipid metabolism and regulating ceramide accumulation. The chain is Phosphatidylinositol:ceramide inositolphosphotransferase (ERH1) from Oryza sativa subsp. indica (Rice).